Here is a 158-residue protein sequence, read N- to C-terminus: Large ribosomal subunit protein uL11 (158 aa).

The tract at residues 1 to 28 (MAGTIEALVPGGQATPGPPLGPELGPTP) is disordered.

Belongs to the universal ribosomal protein uL11 family. Part of the ribosomal stalk of the 50S ribosomal subunit. Interacts with L10 and the large rRNA to form the base of the stalk. L10 forms an elongated spine to which L12 dimers bind in a sequential fashion forming a multimeric L10(L12)X complex.

Functionally, forms part of the ribosomal stalk which helps the ribosome interact with GTP-bound translation factors. This chain is Large ribosomal subunit protein uL11, found in Halorubrum lacusprofundi (strain ATCC 49239 / DSM 5036 / JCM 8891 / ACAM 34).